A 458-amino-acid chain; its full sequence is Protein unc-93 homolog A (458 aa).

5 helical membrane-spanning segments follow: residues 8–28 (VLVV…LQNL), 42–62 (TLST…PILI), 69–89 (WTIV…FHAN), 90–110 (WYTL…LWSA), and 140–160 (IFFL…SLVF). A glycan (N-linked (GlcNAc...) asparagine) is linked at N190. Helical transmembrane passes span 202–222 (TLLG…AVFL), 258–275 (LCLL…QEFL), 286–306 (CALG…MTAL), 321–341 (AALY…FLLW), 345–365 (TNQL…DAVW), 390–410 (LGEA…CVST), and 412–432 (LYIL…VEYL).

Belongs to the unc-93 family.

The protein resides in the cell membrane. In Mus musculus (Mouse), this protein is Protein unc-93 homolog A (Unc93a).